The sequence spans 1088 residues: Protocadherin-19 (1088 aa).

The first 24 residues, 1–24 (MHSKDMDFVQMFVCFLLCWTGVDA), serve as a signal peptide directing secretion. Residues 25–678 (VFNLKYTVEE…QEQIGPVNLS (654 aa)) lie on the Extracellular side of the membrane. 6 consecutive Cadherin domains span residues 31–130 (TVEE…APRF), 131–239 (PTNH…NPVF), 240–347 (DEPV…APEI), 351–454 (SENS…PPYF), 455–563 (TKPH…TPVM), and 569–676 (VNGT…GPVN). The Ca(2+) site is built by glutamate 34 and glutamate 35. Asparagine 44 is a glycosylation site (N-linked (GlcNAc...) asparagine). Residues aspartate 89 and aspartate 91 each coordinate Ca(2+). Cysteine 94 and cysteine 100 form a disulfide bridge. The Ca(2+) site is built by aspartate 122, valine 123, asparagine 124, aspartate 125, asparagine 126, glutamate 141, aspartate 156, aspartate 158, asparagine 162, glutamate 200, aspartate 213, aspartate 231, serine 232, asparagine 233, aspartate 234, asparagine 235, and glutamate 250. An N-linked (GlcNAc...) asparagine glycan is attached at asparagine 262. Ca(2+) contacts are provided by aspartate 265, aspartate 267, and asparagine 271. Asparagine 284 carries an N-linked (GlcNAc...) asparagine glycan. Ca(2+)-binding residues include aspartate 306, glutamate 308, aspartate 339, isoleucine 340, asparagine 341, aspartate 342, asparagine 343, glutamate 361, and aspartate 376. A glycan (N-linked (GlcNAc...) asparagine) is linked at asparagine 377. Ca(2+) contacts are provided by aspartate 378, asparagine 382, aspartate 413, and glutamate 415. Asparagine 421 carries N-linked (GlcNAc...) asparagine glycosylation. Positions 428, 446, 447, 448, 449, 450, 465, 480, 482, 486, 522, 524, and 537 each coordinate Ca(2+). Asparagine 486 is a glycosylation site (N-linked (GlcNAc...) asparagine). Residue asparagine 546 is glycosylated (N-linked (GlcNAc...) asparagine). Residues aspartate 555, valine 556, asparagine 557, aspartate 558, and asparagine 559 each contribute to the Ca(2+) site. Asparagine 570 is a glycosylation site (N-linked (GlcNAc...) asparagine). 4 residues coordinate Ca(2+): aspartate 594, aspartate 596, asparagine 600, and aspartate 646. N-linked (GlcNAc...) asparagine glycosylation is present at asparagine 676. Residues 679-699 (LIFIIALGSIAVILFVTMIFV) traverse the membrane as a helical segment. Residues 700–1088 (AVKCKRDNKE…GSKRLKDIVL (389 aa)) are Cytoplasmic-facing. Disordered regions lie at residues 792–813 (NSRN…GPQQ), 851–875 (DMEG…HDVQ), 970–1032 (TFGK…ASST), and 1067–1088 (TLLQ…DIVL). The span at 859 to 875 (DSGHEESDQTDSEHDVQ) shows a compositional bias: basic and acidic residues. Over residues 1071-1088 (DGRDKESPGSKRLKDIVL) the composition is skewed to basic and acidic residues.

As to quaternary structure, homodimer; antiparallel. Interacts with cadherin cdh2; the interaction confers robust cell adhesion activity on pcdh19. In terms of tissue distribution, in the embryo, strongly expressed in the developing nervous system. At 12 hours post fertilization (hpf), shows a segmental expression pattern in the anterior third of the neural keel with strong expression in the presumptive forebrain, cerebellum/rhombomere 1 and rhombomere 4. By 24 hpf, expressed widely in the brain and spinal cord with higher expression levels in the ventral telencephalon, dorsal and central thalamus, optic tectum, central tegmentum, cerebellum and dorsolateral regions of the hindbrain. As development proceeds, expression becomes restricted to the dorsal and/or lateral regions of the central nervous system. Not detected in the spinal cord of two- and three-day old embryos. Expressed in the eye primordium, developing retina, lens and otic vesicle. Expressed in the larval optic tectum at 4 days post-fertilization where it localizes in discrete columns of neurons. Expressed throughout the adult brain with strong expression in the ventromedial telencephalon, periventricular regions of the thalamus and anterior hypothalamus, stratum periventriculare of the optic tectum, dorsal tegmental nucleus, granular regions of the cerebellar body and valvula, and superficial layers of the facial and vagal lobes.

Its subcellular location is the cell membrane. Its function is as follows. Calcium-dependent cell-adhesion protein. Essential for the early stages of neurulation in the anterior neural plate. Shows little cell adhesion activity on its own but exhibits robust homophilic cell adhesion when in a complex with cadherin cdh2 and appears to mediate the adhesion while cdh2 acts as a cell adhesion cofactor in the complex. Functions with cdh2 to coordinate cell adhesion and cell movements during neurulation. Contributes to neural progenitor cell patterning with cdh2 by promoting homophilic cell interactions. Regulates the columnar organization of neurons in the optic tectum. The chain is Protocadherin-19 from Danio rerio (Zebrafish).